We begin with the raw amino-acid sequence, 375 residues long: Chaperone protein DnaJ (375 aa).

Positions 4 to 68 (DYYEILGVSR…ETRARYDRFG (65 aa)) constitute a J domain. The CR-type zinc-finger motif lies at 135-217 (GGEKEIRISH…CDGKGANQVT (83 aa)). Zn(2+) contacts are provided by Cys-148, Cys-151, Cys-165, Cys-168, Cys-191, Cys-194, Cys-205, and Cys-208. CXXCXGXG motif repeat units lie at residues 148 to 155 (CEVCSGSG), 165 to 172 (CSTCSGSG), 191 to 198 (CPTCNGTG), and 205 to 212 (CDACDGKG).

This sequence belongs to the DnaJ family. Homodimer. Zn(2+) is required as a cofactor.

Its subcellular location is the cytoplasm. Functionally, participates actively in the response to hyperosmotic and heat shock by preventing the aggregation of stress-denatured proteins and by disaggregating proteins, also in an autonomous, DnaK-independent fashion. Unfolded proteins bind initially to DnaJ; upon interaction with the DnaJ-bound protein, DnaK hydrolyzes its bound ATP, resulting in the formation of a stable complex. GrpE releases ADP from DnaK; ATP binding to DnaK triggers the release of the substrate protein, thus completing the reaction cycle. Several rounds of ATP-dependent interactions between DnaJ, DnaK and GrpE are required for fully efficient folding. Also involved, together with DnaK and GrpE, in the DNA replication of plasmids through activation of initiation proteins. The polypeptide is Chaperone protein DnaJ (Nostoc punctiforme (strain ATCC 29133 / PCC 73102)).